A 215-amino-acid polypeptide reads, in one-letter code: FGFR1 oncogene partner 2 homolog (215 aa).

2 coiled-coil regions span residues 5–104 (IEKA…MSKY) and 161–185 (KEQERIFQLEQENKGLREILQITRE). The disordered stretch occupies residues 194 to 215 (DASESTSLSALVTNSDLSLRKN). The segment covering 197–215 (ESTSLSALVTNSDLSLRKN) has biased composition (polar residues).

It belongs to the SIKE family.

It localises to the cytoplasm. In terms of biological role, may be involved in wound healing pathway. In Pongo abelii (Sumatran orangutan), this protein is FGFR1 oncogene partner 2 homolog (FGFR1OP2).